The sequence spans 211 residues: Thiamine-phosphate synthase (211 aa).

4-amino-2-methyl-5-(diphosphooxymethyl)pyrimidine-binding positions include 37–41 (QLRIK) and Asn69. 2 residues coordinate Mg(2+): Asp70 and Asp89. Ser108 is a binding site for 4-amino-2-methyl-5-(diphosphooxymethyl)pyrimidine. 134–136 (TQT) contributes to the 2-[(2R,5Z)-2-carboxy-4-methylthiazol-5(2H)-ylidene]ethyl phosphate binding site. Lys137 lines the 4-amino-2-methyl-5-(diphosphooxymethyl)pyrimidine pocket. Residues Gly166 and 186 to 187 (VS) each bind 2-[(2R,5Z)-2-carboxy-4-methylthiazol-5(2H)-ylidene]ethyl phosphate.

Belongs to the thiamine-phosphate synthase family. Requires Mg(2+) as cofactor.

The enzyme catalyses 2-[(2R,5Z)-2-carboxy-4-methylthiazol-5(2H)-ylidene]ethyl phosphate + 4-amino-2-methyl-5-(diphosphooxymethyl)pyrimidine + 2 H(+) = thiamine phosphate + CO2 + diphosphate. The catalysed reaction is 2-(2-carboxy-4-methylthiazol-5-yl)ethyl phosphate + 4-amino-2-methyl-5-(diphosphooxymethyl)pyrimidine + 2 H(+) = thiamine phosphate + CO2 + diphosphate. It carries out the reaction 4-methyl-5-(2-phosphooxyethyl)-thiazole + 4-amino-2-methyl-5-(diphosphooxymethyl)pyrimidine + H(+) = thiamine phosphate + diphosphate. It participates in cofactor biosynthesis; thiamine diphosphate biosynthesis; thiamine phosphate from 4-amino-2-methyl-5-diphosphomethylpyrimidine and 4-methyl-5-(2-phosphoethyl)-thiazole: step 1/1. Functionally, condenses 4-methyl-5-(beta-hydroxyethyl)thiazole monophosphate (THZ-P) and 2-methyl-4-amino-5-hydroxymethyl pyrimidine pyrophosphate (HMP-PP) to form thiamine monophosphate (TMP). The protein is Thiamine-phosphate synthase of Shigella dysenteriae serotype 1 (strain Sd197).